The chain runs to 423 residues: Imidazolonepropionase (423 aa).

Fe(3+) contacts are provided by histidine 87 and histidine 89. 2 residues coordinate Zn(2+): histidine 87 and histidine 89. The 4-imidazolone-5-propanoate site is built by arginine 96, tyrosine 159, and histidine 192. An N-formimidoyl-L-glutamate-binding site is contributed by tyrosine 159. Fe(3+) is bound at residue histidine 257. Histidine 257 is a Zn(2+) binding site. Glutamate 260 lines the 4-imidazolone-5-propanoate pocket. Aspartate 331 is a Fe(3+) binding site. Aspartate 331 lines the Zn(2+) pocket. N-formimidoyl-L-glutamate is bound by residues asparagine 333 and glycine 335. Serine 336 contacts 4-imidazolone-5-propanoate.

It belongs to the metallo-dependent hydrolases superfamily. HutI family. Requires Zn(2+) as cofactor. The cofactor is Fe(3+).

It localises to the cytoplasm. The enzyme catalyses 4-imidazolone-5-propanoate + H2O = N-formimidoyl-L-glutamate. Its pathway is amino-acid degradation; L-histidine degradation into L-glutamate; N-formimidoyl-L-glutamate from L-histidine: step 3/3. Catalyzes the hydrolytic cleavage of the carbon-nitrogen bond in imidazolone-5-propanoate to yield N-formimidoyl-L-glutamate. It is the third step in the universal histidine degradation pathway. The polypeptide is Imidazolonepropionase (Porphyromonas gingivalis (strain ATCC BAA-308 / W83)).